A 103-amino-acid polypeptide reads, in one-letter code: Pyrimidine/purine nucleoside phosphorylase (103 aa).

The protein belongs to the nucleoside phosphorylase PpnP family.

It catalyses the reaction a purine D-ribonucleoside + phosphate = a purine nucleobase + alpha-D-ribose 1-phosphate. The enzyme catalyses adenosine + phosphate = alpha-D-ribose 1-phosphate + adenine. It carries out the reaction cytidine + phosphate = cytosine + alpha-D-ribose 1-phosphate. The catalysed reaction is guanosine + phosphate = alpha-D-ribose 1-phosphate + guanine. It catalyses the reaction inosine + phosphate = alpha-D-ribose 1-phosphate + hypoxanthine. The enzyme catalyses thymidine + phosphate = 2-deoxy-alpha-D-ribose 1-phosphate + thymine. It carries out the reaction uridine + phosphate = alpha-D-ribose 1-phosphate + uracil. The catalysed reaction is xanthosine + phosphate = alpha-D-ribose 1-phosphate + xanthine. Its function is as follows. Catalyzes the phosphorolysis of diverse nucleosides, yielding D-ribose 1-phosphate and the respective free bases. Can use uridine, adenosine, guanosine, cytidine, thymidine, inosine and xanthosine as substrates. Also catalyzes the reverse reactions. The polypeptide is Pyrimidine/purine nucleoside phosphorylase (Shewanella sp. (strain ANA-3)).